A 240-amino-acid chain; its full sequence is Ubiquinone biosynthesis O-methyltransferase (240 aa).

S-adenosyl-L-methionine is bound by residues arginine 44, glycine 64, aspartate 85, and methionine 129.

The protein belongs to the methyltransferase superfamily. UbiG/COQ3 family.

The catalysed reaction is a 3-demethylubiquinol + S-adenosyl-L-methionine = a ubiquinol + S-adenosyl-L-homocysteine + H(+). It carries out the reaction a 3-(all-trans-polyprenyl)benzene-1,2-diol + S-adenosyl-L-methionine = a 2-methoxy-6-(all-trans-polyprenyl)phenol + S-adenosyl-L-homocysteine + H(+). It functions in the pathway cofactor biosynthesis; ubiquinone biosynthesis. O-methyltransferase that catalyzes the 2 O-methylation steps in the ubiquinone biosynthetic pathway. The chain is Ubiquinone biosynthesis O-methyltransferase from Photorhabdus laumondii subsp. laumondii (strain DSM 15139 / CIP 105565 / TT01) (Photorhabdus luminescens subsp. laumondii).